A 158-amino-acid polypeptide reads, in one-letter code: Large ribosomal subunit protein uL30 (158 aa).

The protein belongs to the universal ribosomal protein uL30 family. Part of the 50S ribosomal subunit.

The protein is Large ribosomal subunit protein uL30 of Saccharolobus islandicus (strain Y.G.57.14 / Yellowstone #1) (Sulfolobus islandicus).